The sequence spans 904 residues: MFARLAFGAWPGSPQVAISVRMAQTAKKDMAPPASAPTPMMAQYLALKAAAEDCLLFYRMGDFFELFFDDAKTASACLDIALTARGEHDGQPIPMCGVPAHSAEGYLARLIKAGHRVAIADQTESPAEAKKRAGSKALVGRAIVRVVTAGTLTEEALLDSRAANWLVAVAGAGQGADRRIGIAAADISTGRFEIAGLIPSALDAELARLDAAEIVVPEDFEEPPAGAVAWPREHFESVRGEERLKRLLGVATLDGFGAFTRAELAAAGALIAYLERAGQGSLPFLQPPRRRVVADHMMIDAATRESLEITLSQAGVRKGSLLDAVDRTVTGAGARLLGADLSAPLTDVGAIEARLDLVALFEGDGALRERLRGALRALPDVGRALGRLVARRGSPRDLGQLRDGLDQARLLHELLGRAAPMPALLAGLLPQLVGHDELVDLLRRALVATPPIDAAQGGYIAEGYDPALDALRGQGGEGRKAIAALEARYRAETGIPSLKIKHNGVLGYHIEVQAKHADPLMTADSGFTHRQTLAGVVRFNAPDLHEQAMRVGQSGEHALAAEAAHLEELMAAALGRTAEIAATADALARLDVAAALAERAAEGGWTRPHFEPHSCFDVIGGRHPVVEAAVAAQGARFVANDCRLSDQERLWLVTGPNMGGKSTFLRQNAAIAILAQAGSPVPATSARLGIVDRLFSRVGASDNLARGRSTFMVEMVETAAILAQATERSFVILDEVGRGTSTYDGLAIAWAVVEAVHDINRCRCLFATHYHELTRLAERLDALSLHHVRAREWKGELVLLHELADGPADRSYGIAVAKLAGLSPPVLARARDVLKKLEAGRAATGGLAAGLDDLPLFAAAAQVEEAAPDPLRHEIETIDVDSLSPREALDILYRLKTLAREAAE.

Position 655-662 (655-662 (GPNMGGKS)) interacts with ATP.

The protein belongs to the DNA mismatch repair MutS family.

Functionally, this protein is involved in the repair of mismatches in DNA. It is possible that it carries out the mismatch recognition step. This protein has a weak ATPase activity. In Rhizorhabdus wittichii (strain DSM 6014 / CCUG 31198 / JCM 15750 / NBRC 105917 / EY 4224 / RW1) (Sphingomonas wittichii), this protein is DNA mismatch repair protein MutS.